The following is a 278-amino-acid chain: Dermonecrotic toxin Ls4SicTox-alphaIII1ii (278 aa).

The active site involves histidine 5. 2 residues coordinate Mg(2+): glutamate 25 and aspartate 27. Histidine 40 acts as the Nucleophile in catalysis. The cysteines at positions 44 and 50 are disulfide-linked. Aspartate 84 contributes to the Mg(2+) binding site.

The protein belongs to the arthropod phospholipase D family. Class I subfamily. It depends on Mg(2+) as a cofactor. In terms of tissue distribution, expressed by the venom gland.

Its subcellular location is the secreted. The enzyme catalyses an N-(acyl)-sphingosylphosphocholine = an N-(acyl)-sphingosyl-1,3-cyclic phosphate + choline. The catalysed reaction is an N-(acyl)-sphingosylphosphoethanolamine = an N-(acyl)-sphingosyl-1,3-cyclic phosphate + ethanolamine. It carries out the reaction a 1-acyl-sn-glycero-3-phosphocholine = a 1-acyl-sn-glycero-2,3-cyclic phosphate + choline. It catalyses the reaction a 1-acyl-sn-glycero-3-phosphoethanolamine = a 1-acyl-sn-glycero-2,3-cyclic phosphate + ethanolamine. Its function is as follows. Dermonecrotic toxins cleave the phosphodiester linkage between the phosphate and headgroup of certain phospholipids (sphingolipid and lysolipid substrates), forming an alcohol (often choline) and a cyclic phosphate. This toxin acts on sphingomyelin (SM). It may also act on ceramide phosphoethanolamine (CPE), lysophosphatidylcholine (LPC) and lysophosphatidylethanolamine (LPE), but not on lysophosphatidylserine (LPS), and lysophosphatidylglycerol (LPG). It acts by transphosphatidylation, releasing exclusively cyclic phosphate products as second products. Induces dermonecrosis, hemolysis, increased vascular permeability, edema, inflammatory response, and platelet aggregation. This Loxosceles sp. (strain 4 GJB-2008) (Recluse spider) protein is Dermonecrotic toxin Ls4SicTox-alphaIII1ii.